We begin with the raw amino-acid sequence, 228 residues long: L-ribulose-5-phosphate 4-epimerase UlaF (228 aa).

Substrate-binding positions include 26–27 (GN), 43–44 (SG), and 72–73 (SS). Residues Asp74, His93, and His95 each coordinate Zn(2+). Asp118 functions as the Proton donor/acceptor in the catalytic mechanism. Residue His167 coordinates Zn(2+). Catalysis depends on Tyr225, which acts as the Proton donor/acceptor.

It belongs to the aldolase class II family. AraD/FucA subfamily. Requires Zn(2+) as cofactor.

The catalysed reaction is L-ribulose 5-phosphate = D-xylulose 5-phosphate. The protein operates within cofactor degradation; L-ascorbate degradation; D-xylulose 5-phosphate from L-ascorbate: step 4/4. Its function is as follows. Catalyzes the isomerization of L-ribulose 5-phosphate to D-xylulose 5-phosphate. Is involved in the anaerobic L-ascorbate utilization. This is L-ribulose-5-phosphate 4-epimerase UlaF from Escherichia coli O45:K1 (strain S88 / ExPEC).